The following is a 350-amino-acid chain: UDP-3-O-acylglucosamine N-acyltransferase (350 aa).

His-248 serves as the catalytic Proton acceptor.

The protein belongs to the transferase hexapeptide repeat family. LpxD subfamily. Homotrimer.

It carries out the reaction a UDP-3-O-[(3R)-3-hydroxyacyl]-alpha-D-glucosamine + a (3R)-hydroxyacyl-[ACP] = a UDP-2-N,3-O-bis[(3R)-3-hydroxyacyl]-alpha-D-glucosamine + holo-[ACP] + H(+). Its pathway is bacterial outer membrane biogenesis; LPS lipid A biosynthesis. Functionally, catalyzes the N-acylation of UDP-3-O-acylglucosamine using 3-hydroxyacyl-ACP as the acyl donor. Is involved in the biosynthesis of lipid A, a phosphorylated glycolipid that anchors the lipopolysaccharide to the outer membrane of the cell. This Nostoc punctiforme (strain ATCC 29133 / PCC 73102) protein is UDP-3-O-acylglucosamine N-acyltransferase.